Reading from the N-terminus, the 230-residue chain is Ribonuclease 3 (230 aa).

One can recognise an RNase III domain in the interval 5-125 (YSRFYNILGY…VIGAIYLDSD (121 aa)). E40 is a Mg(2+) binding site. D44 is an active-site residue. Mg(2+) contacts are provided by D111 and E114. Residue E114 is part of the active site. In terms of domain architecture, DRBM spans 153–223 (DSKSKLQEIL…AEKMIEMLSQ (71 aa)).

Belongs to the ribonuclease III family. As to quaternary structure, homodimer. Mg(2+) is required as a cofactor.

Its subcellular location is the cytoplasm. It carries out the reaction Endonucleolytic cleavage to 5'-phosphomonoester.. Digests double-stranded RNA. Involved in the processing of primary rRNA transcript to yield the immediate precursors to the large and small rRNAs (23S and 16S). Processes some mRNAs, and tRNAs when they are encoded in the rRNA operon. Processes pre-crRNA and tracrRNA of type II CRISPR loci if present in the organism. The chain is Ribonuclease 3 from Francisella tularensis subsp. holarctica (strain OSU18).